The chain runs to 154 residues: Xanthine-guanine phosphoribosyltransferase (154 aa).

Residues 37 to 38, R69, and 88 to 96 contribute to the 5-phospho-alpha-D-ribose 1-diphosphate site; these read RG and EDLVDSGDT. A GMP-binding site is contributed by R69. Residue D89 participates in Mg(2+) binding. Positions 92 and 135 each coordinate guanine. D92 and I135 together coordinate xanthine. GMP contacts are provided by residues 92–96 and 134–135; these read DSGDT and WI.

It belongs to the purine/pyrimidine phosphoribosyltransferase family. XGPT subfamily. In terms of assembly, homotetramer. The cofactor is Mg(2+).

It localises to the cell inner membrane. It catalyses the reaction GMP + diphosphate = guanine + 5-phospho-alpha-D-ribose 1-diphosphate. It carries out the reaction XMP + diphosphate = xanthine + 5-phospho-alpha-D-ribose 1-diphosphate. The enzyme catalyses IMP + diphosphate = hypoxanthine + 5-phospho-alpha-D-ribose 1-diphosphate. It functions in the pathway purine metabolism; GMP biosynthesis via salvage pathway; GMP from guanine: step 1/1. The protein operates within purine metabolism; XMP biosynthesis via salvage pathway; XMP from xanthine: step 1/1. In terms of biological role, purine salvage pathway enzyme that catalyzes the transfer of the ribosyl-5-phosphate group from 5-phospho-alpha-D-ribose 1-diphosphate (PRPP) to the N9 position of the 6-oxopurines guanine and xanthine to form the corresponding ribonucleotides GMP (guanosine 5'-monophosphate) and XMP (xanthosine 5'-monophosphate), with the release of PPi. To a lesser extent, also acts on hypoxanthine. The protein is Xanthine-guanine phosphoribosyltransferase of Vibrio parahaemolyticus serotype O3:K6 (strain RIMD 2210633).